Here is a 557-residue protein sequence, read N- to C-terminus: Formate--tetrahydrofolate ligase 1 (557 aa).

66-73 (TPAGEGKT) provides a ligand contact to ATP.

Belongs to the formate--tetrahydrofolate ligase family.

The enzyme catalyses (6S)-5,6,7,8-tetrahydrofolate + formate + ATP = (6R)-10-formyltetrahydrofolate + ADP + phosphate. The protein operates within one-carbon metabolism; tetrahydrofolate interconversion. The polypeptide is Formate--tetrahydrofolate ligase 1 (Streptococcus sanguinis (strain SK36)).